We begin with the raw amino-acid sequence, 462 residues long: GTPase Der (462 aa).

EngA-type G domains follow at residues 3-170 (ITIA…TSQK) and 201-372 (IKIA…FNSI). GTP is bound by residues 9-16 (GRTNVGKS), 57-61 (DTPGI), 122-125 (NKIE), 207-214 (GKPNVGKS), 254-258 (DTAGI), and 319-322 (NKND). One can recognise a KH-like domain in the interval 373–457 (KKIHTSKITE…SIVLYFKSSK (85 aa)).

It belongs to the TRAFAC class TrmE-Era-EngA-EngB-Septin-like GTPase superfamily. EngA (Der) GTPase family. As to quaternary structure, associates with the 50S ribosomal subunit.

In terms of biological role, GTPase that plays an essential role in the late steps of ribosome biogenesis. This chain is GTPase Der, found in Buchnera aphidicola subsp. Baizongia pistaciae (strain Bp).